The following is a 459-amino-acid chain: Bifunctional protein GlmU (459 aa).

The segment at 1 to 230 (MSNRFAVILA…FDETLGVNDR (230 aa)) is pyrophosphorylase. Residues 9-12 (LAAG), K23, Q73, and 78-79 (GT) contribute to the UDP-N-acetyl-alpha-D-glucosamine site. A Mg(2+)-binding site is contributed by D103. The UDP-N-acetyl-alpha-D-glucosamine site is built by G140, E155, N170, and N228. A Mg(2+)-binding site is contributed by N228. The segment at 231 to 251 (VALSQAEIIMKNRINRKNMVN) is linker. An N-acetyltransferase region spans residues 252–459 (GVTIIDPSNT…VDQLLNKKKS (208 aa)). UDP-N-acetyl-alpha-D-glucosamine contacts are provided by R333 and K351. The active-site Proton acceptor is H363. The UDP-N-acetyl-alpha-D-glucosamine site is built by Y366 and N377. Acetyl-CoA-binding positions include 386–387 (NY), A423, and R440.

This sequence in the N-terminal section; belongs to the N-acetylglucosamine-1-phosphate uridyltransferase family. In the C-terminal section; belongs to the transferase hexapeptide repeat family. Homotrimer. It depends on Mg(2+) as a cofactor.

Its subcellular location is the cytoplasm. The catalysed reaction is alpha-D-glucosamine 1-phosphate + acetyl-CoA = N-acetyl-alpha-D-glucosamine 1-phosphate + CoA + H(+). It catalyses the reaction N-acetyl-alpha-D-glucosamine 1-phosphate + UTP + H(+) = UDP-N-acetyl-alpha-D-glucosamine + diphosphate. It functions in the pathway nucleotide-sugar biosynthesis; UDP-N-acetyl-alpha-D-glucosamine biosynthesis; N-acetyl-alpha-D-glucosamine 1-phosphate from alpha-D-glucosamine 6-phosphate (route II): step 2/2. It participates in nucleotide-sugar biosynthesis; UDP-N-acetyl-alpha-D-glucosamine biosynthesis; UDP-N-acetyl-alpha-D-glucosamine from N-acetyl-alpha-D-glucosamine 1-phosphate: step 1/1. Its pathway is bacterial outer membrane biogenesis; LPS lipid A biosynthesis. Catalyzes the last two sequential reactions in the de novo biosynthetic pathway for UDP-N-acetylglucosamine (UDP-GlcNAc). The C-terminal domain catalyzes the transfer of acetyl group from acetyl coenzyme A to glucosamine-1-phosphate (GlcN-1-P) to produce N-acetylglucosamine-1-phosphate (GlcNAc-1-P), which is converted into UDP-GlcNAc by the transfer of uridine 5-monophosphate (from uridine 5-triphosphate), a reaction catalyzed by the N-terminal domain. This chain is Bifunctional protein GlmU, found in Bacillus cereus (strain ATCC 14579 / DSM 31 / CCUG 7414 / JCM 2152 / NBRC 15305 / NCIMB 9373 / NCTC 2599 / NRRL B-3711).